A 394-amino-acid chain; its full sequence is Choline/ethanolamine kinase (394 aa).

The segment at Met-1–Ser-42 is disordered. Ala-2 bears the N-acetylalanine mark. A compositionally biased stretch (gly residues) spans Gly-7 to Pro-19. ATP is bound by residues Ser-75–Leu-81, Arg-104, Gln-146–Pro-152, Gln-244, and Asp-264. Gly-77 to Ser-79 serves as a coordination point for substrate.

This sequence belongs to the choline/ethanolamine kinase family. Homodimer, and heterodimer with CHKA. Expressed ubiquitously with the highest level in testis.

It catalyses the reaction choline + ATP = phosphocholine + ADP + H(+). The catalysed reaction is ethanolamine + ATP = phosphoethanolamine + ADP + H(+). It participates in phospholipid metabolism; phosphatidylethanolamine biosynthesis; phosphatidylethanolamine from ethanolamine: step 1/3. Its function is as follows. Has a key role in phospholipid metabolism, and catalyzes the first step of phosphatidylethanolamine and phosphatidylcholine biosynthesis. In Mus musculus (Mouse), this protein is Choline/ethanolamine kinase (Chkb).